A 1646-amino-acid chain; its full sequence is Monensin-resistant homolog 2 (1646 aa).

The protein belongs to the MON2 family.

The protein resides in the golgi apparatus. Functionally, may be required for traffic between late Golgi and early endosomes. The chain is Monensin-resistant homolog 2 (mon-2) from Caenorhabditis elegans.